We begin with the raw amino-acid sequence, 688 residues long: Lipase (688 aa).

A signal peptide spans 1-35 (MKTRQNKYSIRKFSVGASSILIAALLFMGGGSAQA). Residues 31-309 (GSAQAAEQQQ…KSAKQKQYKN (279 aa)) form a disordered region. The propeptide at 36-302 (AEQQQDKGTV…KNEDQTNKSA (267 aa)) is removed in mature form. Over residues 45-54 (VENSTTQSIG) the composition is skewed to polar residues. Composition is skewed to basic and acidic residues over residues 84 to 95 (ESLHNETPKNED) and 103 to 143 (SQND…KHAS). 2 stretches are compositionally biased toward polar residues: residues 144-175 (ENNQ…AQQE) and 184-211 (KQDT…QSTE). The span at 227–268 (KNDDDKVETFNLNSKEEPLKVDKQANPTTDKDKSSKNDKGSH) shows a compositional bias: basic and acidic residues. Positions 274 to 289 (LESNAVATTNKQSKQQ) are enriched in polar residues. Catalysis depends on S418, which acts as the Nucleophile. The active-site Charge relay system is D609. D647 is a binding site for Ca(2+). Catalysis depends on H648, which acts as the Charge relay system. 3 residues coordinate Ca(2+): D650, D655, and D658.

It belongs to the AB hydrolase superfamily. Lipase family.

The protein resides in the secreted. The enzyme catalyses a triacylglycerol + H2O = a diacylglycerol + a fatty acid + H(+). This Staphylococcus epidermidis (strain ATCC 35984 / DSM 28319 / BCRC 17069 / CCUG 31568 / BM 3577 / RP62A) protein is Lipase (lip).